Reading from the N-terminus, the 213-residue chain is Octanoyltransferase (213 aa).

One can recognise a BPL/LPL catalytic domain in the interval 32-207 (ENTPDEIWLV…NILALLNNPP (176 aa)). Residues 71–78 (RGGQVTYH), 138–140 (SLG), and 151–153 (GLA) each bind substrate. The active-site Acyl-thioester intermediate is Cys169.

The protein belongs to the LipB family.

It localises to the cytoplasm. The catalysed reaction is octanoyl-[ACP] + L-lysyl-[protein] = N(6)-octanoyl-L-lysyl-[protein] + holo-[ACP] + H(+). It functions in the pathway protein modification; protein lipoylation via endogenous pathway; protein N(6)-(lipoyl)lysine from octanoyl-[acyl-carrier-protein]: step 1/2. Functionally, catalyzes the transfer of endogenously produced octanoic acid from octanoyl-acyl-carrier-protein onto the lipoyl domains of lipoate-dependent enzymes. Lipoyl-ACP can also act as a substrate although octanoyl-ACP is likely to be the physiological substrate. This is Octanoyltransferase from Citrobacter koseri (strain ATCC BAA-895 / CDC 4225-83 / SGSC4696).